Consider the following 156-residue polypeptide: Protein BUNDLE SHEATH DEFECTIVE 2, chloroplastic (156 aa).

Residues 1–41 constitute a chloroplast transit peptide; that stretch reads MNSAALNARTASVAPQPQACHACKCRQLLSRRVPPAQRQVE. Zn(2+)-binding residues include cysteine 78, cysteine 81, cysteine 89, cysteine 92, cysteine 133, cysteine 136, cysteine 144, and cysteine 147.

This sequence belongs to the BSD2 chaperone family. Interacts with the RuBisCo large subunit (RbcL) assembled as an intermediate complex made of eight RbcL and eight BSD2 subunits.

It localises to the plastid. The protein localises to the chloroplast stroma. Its function is as follows. Chloroplast chaperone required for RuBisCo biogenesis and translational regulation of the RuBisCo large subunit (RbcL). Stabilizes an end-state assembly intermediate of eight RbcL subunits until the small subunits (RBCSs) become available to produce a complete stable RuBisCo complex containing eight small and eight large subunits. This chain is Protein BUNDLE SHEATH DEFECTIVE 2, chloroplastic, found in Chlamydomonas reinhardtii (Chlamydomonas smithii).